The primary structure comprises 519 residues: MAAPTEEDPRRDTSLMINERCNFPHNMLSEENINFIQDAVCNGDLGAVAALNSGLPMAPYMLEALLAVRVKHRLTKVRQTLEPVICYTISVAHLINGTRILRSATAKHATAWGPNDKHRAESGLRRIYRALNLEDNPFDLVEAVGDLDLSQGAYEGYVRHIYSLMKSLGHDVGHLSRSLDYSTMTVFNYLYESPLFTSQEAVTMYSRNLAGITKMSREPFETLSVVHRSKEPPEILNDMLFLLSVGRMIVLHQESLRALRKNLILTASALCSILYTAYTQVPETKSLFREVAHEAHALLSSRSPDTPNFRPFVACMLQFIKQIIAADVYTCPRYLTNQILAVTARMHGLEGAAMGHDDDLDIEVDPGNPYSAKYRMNNPYNDQNIFKCPRSLVHYVGDALFKKTMTQELLVSCTDQEATYQTYELPSVSELVGEGVAKRAHLTPDQLSHYLSVVSTPVEVVTDDIEDGEQEEDLFADVSVAPASPVRPIRGGGQRMANMRGARPYSTVQRGRRRHESEV.

Residues 485-519 (PVRPIRGGGQRMANMRGARPYSTVQRGRRRHESEV) form a disordered region. The segment covering 510-519 (RGRRRHESEV) has biased composition (basic residues).

It localises to the host nucleus. Functionally, plays a role in the inhibition of host type I interferon production within the host nucleus. Targets specifically the NF-kappa-B-mediated interferon-beta transcription. The protein is Protein M35 (M35) of Mus musculus (Mouse).